Reading from the N-terminus, the 104-residue chain is Flagellar hook-basal body complex protein FliE (104 aa).

The protein belongs to the FliE family.

The protein localises to the bacterial flagellum basal body. This chain is Flagellar hook-basal body complex protein FliE, found in Pectobacterium atrosepticum (strain SCRI 1043 / ATCC BAA-672) (Erwinia carotovora subsp. atroseptica).